A 274-amino-acid chain; its full sequence is Large ribosomal subunit protein uL2 (274 aa).

Positions 223-274 (VAMNPVDHPHGGGEGRTSGGRHPVTPWGVPTKGYKTRSNKRTDKYIVRRRNK) are disordered.

The protein belongs to the universal ribosomal protein uL2 family. As to quaternary structure, part of the 50S ribosomal subunit. Forms a bridge to the 30S subunit in the 70S ribosome.

Functionally, one of the primary rRNA binding proteins. Required for association of the 30S and 50S subunits to form the 70S ribosome, for tRNA binding and peptide bond formation. It has been suggested to have peptidyltransferase activity; this is somewhat controversial. Makes several contacts with the 16S rRNA in the 70S ribosome. The chain is Large ribosomal subunit protein uL2 from Shewanella oneidensis (strain ATCC 700550 / JCM 31522 / CIP 106686 / LMG 19005 / NCIMB 14063 / MR-1).